Here is a 305-residue protein sequence, read N- to C-terminus: Acetaldehyde dehydrogenase (305 aa).

Residue 13–16 (SGNI) participates in NAD(+) binding. Cys128 functions as the Acyl-thioester intermediate in the catalytic mechanism. NAD(+) contacts are provided by residues 159 to 167 (SAGPGTRQN) and Asn278.

Belongs to the acetaldehyde dehydrogenase family.

It carries out the reaction acetaldehyde + NAD(+) + CoA = acetyl-CoA + NADH + H(+). This chain is Acetaldehyde dehydrogenase, found in Chloroflexus aurantiacus (strain ATCC 29366 / DSM 635 / J-10-fl).